Consider the following 130-residue polypeptide: Small ribosomal subunit protein uS9 (130 aa).

This sequence belongs to the universal ribosomal protein uS9 family.

This is Small ribosomal subunit protein uS9 from Pseudomonas putida (strain ATCC 700007 / DSM 6899 / JCM 31910 / BCRC 17059 / LMG 24140 / F1).